The sequence spans 908 residues: Collagen alpha-2(I) chain (908 aa).

Residues 1-36 (GPMGIMGPRGPPGASGAPGPAGEPGEPGQTGPAGAR) are compositionally biased toward low complexity. Disordered stretches follow at residues 1–211 (GPMG…GITG) and 227–908 (IPGP…PGPS). Positions 45-59 (AGEDGHPGKPGRPGE) are enriched in basic and acidic residues. 8 stretches are compositionally biased toward low complexity: residues 129–158 (VGAPGPAGARGSDGSVGPVGPAGPIGSAGP), 183–197 (AGPRGEVGIPGVSGP), 234–249 (PGPVGAAGATGARGIV), 293–309 (STGPTGPPGIRGSRGIP), 403–418 (AGIAGARGPAGPPGFQ), 465–474 (PAGPIGSRGP), 526–542 (RRGAPGAIGAPGPAGAN), and 569–589 (VGPAGPNGFAGPAGAAGQPGA). A compositionally biased stretch (basic and acidic residues) spans 590-599 (KGERGTKGPK). Over residues 602–617 (NGPVGPTGPVGAAGPA) the composition is skewed to low complexity. The segment covering 627–636 (GSRGDGGPPG) has biased composition (gly residues). 4 stretches are compositionally biased toward low complexity: residues 637 to 647 (ATGFPGAAGRT), 701 to 730 (AGEPGTAGIPGTPGPQGIIGAPGIIGIPGS), 745 to 775 (EPGPIGIAGPPGARGPPGAVGNPGVNGAPGE), and 785 to 805 (PGPAGSVGPAGAVGPRGPSGP). Residues 809-820 (RGDKGEPGDKGP) show a composition bias toward basic and acidic residues. Over residues 893 to 908 (AGPPGPPGPPGPPGPS) the composition is skewed to pro residues.

This sequence belongs to the fibrillar collagen family. In terms of assembly, trimers of one alpha 2(I) and two alpha 1(I) chains. Interacts (via C-terminus) with TMEM131 (via PapD-L domain); the interaction is direct and is involved in assembly and TRAPPIII ER-to-Golgi transport complex-dependent secretion of collagen. In terms of processing, prolines at the third position of the tripeptide repeating unit (G-X-Y) are hydroxylated in some or all of the chains. In terms of tissue distribution, forms the fibrils of tendon, ligaments and bones. In bones, the fibrils are mineralized with calcium hydroxyapatite.

It is found in the secreted. Its subcellular location is the extracellular space. The protein localises to the extracellular matrix. Type I collagen is a member of group I collagen (fibrillar forming collagen). The protein is Collagen alpha-2(I) chain of Toxodon sp.